The primary structure comprises 517 residues: General transcription factor IIF subunit 1 (517 aa).

Alanine 2 carries the post-translational modification N-acetylalanine. Threonine 156 bears the Phosphothreonine mark. The interval 178 to 458 (QQRRLKDQDQ…SGDVQVTEDA (281 aa)) is disordered. A compositionally biased stretch (acidic residues) spans 210–225 (LEDDLEMSSDDSEASG). Residues serine 217, serine 218, serine 221, and serine 224 each carry the phosphoserine modification. Positions 232-251 (PKAKKKAPPSKGGRKKKKKK) are enriched in basic residues. 2 stretches are compositionally biased toward acidic residues: residues 255–270 (DEAF…EGQE) and 303–325 (EQSE…EEEE). Threonine 331 carries the phosphothreonine modification. Residues 343–355 (EESDSSEESDIDS) show a composition bias toward acidic residues. The span at 364–374 (AKKKTPPKRER) shows a compositional bias: basic residues. Phosphoserine is present on residues serine 377, serine 380, serine 381, and serine 385. A compositionally biased stretch (low complexity) spans 377-391 (SGGSSRGNSRPGTPS). Threonine 389 carries the post-translational modification Phosphothreonine. Serine 391 is modified (phosphoserine). Over residues 392 to 401 (TEAGSTSSTL) the composition is skewed to polar residues. The residue at position 407 (lysine 407) is an N6-acetyllysine. Residues 428–452 (GPQSLSGKSTPQPQSGKSTPSSGDV) are compositionally biased toward polar residues. Serine 431, serine 433, and serine 436 each carry phosphoserine. Residues threonine 437 and threonine 446 each carry the phosphothreonine modification. Position 449 is a phosphoserine (serine 449).

It belongs to the TFIIF alpha subunit family. In terms of assembly, heterodimer of an alpha and a beta subunit. Interacts with GTF2F2, CTDP1, TAF6/TAFII80 and URI1. Interacts with GTF2B (via C-terminus and preferentially via acetylated form); this interaction prevents binding of GTF2B to GTF2F2. Part of TBP-based Pol II pre-initiation complex (PIC), in which Pol II core assembles with general transcription factors and other specific initiation factors including GTF2E1, GTF2E2, GTF2F1, GTF2F2, TCEA1, ERCC2, ERCC3, GTF2H2, GTF2H3, GTF2H4, GTF2H5, GTF2A1, GTF2A2, GTF2B and TBP; this large multi-subunit PIC complex mediates DNA unwinding and targets Pol II core to the transcription start site where the first phosphodiester bond forms. Post-translationally, phosphorylated on Ser and other residues by TAF1 and casein kinase II-like kinases.

It localises to the nucleus. In terms of biological role, TFIIF is a general transcription initiation factor that binds to RNA polymerase II and helps to recruit it to the initiation complex in collaboration with TFIIB. It promotes transcription elongation. This is General transcription factor IIF subunit 1 (GTF2F1) from Bos taurus (Bovine).